Consider the following 864-residue polypeptide: Carbohydrate-responsive element-binding protein (864 aa).

Disordered regions lie at residues 15-41 (PRVVPSPDSDSDTDLEDPSPRRSAGGL) and 53-77 (MVSSPHSDSLTRRRDQEGPVGLADF). Phosphoserine occurs at positions 20, 23, and 25. Thr-27 is modified (phosphothreonine). At Ser-196 the chain carries Phosphoserine. Disordered stretches follow at residues 332–397 (SSGI…APGP), 449–468 (PGVSTLPAPTTFVPTPQPGP), 489–533 (PHFT…TARD), 547–570 (PEQALEPPTMPGTLLRPPESPQDT), and 583–602 (PIPAPTPPRPPPGPATLAPP). The segment covering 351-368 (GMTPHSGNTRLQARNSCS) has biased composition (polar residues). Residues 513-531 (ASPPTLASATASPTATATA) are compositionally biased toward low complexity. Position 566 is a phosphoserine; by AMPK (Ser-566). A compositionally biased stretch (pro residues) spans 583-596 (PIPAPTPPRPPPGP). A phosphoserine mark is found at Ser-614, Ser-626, and Ser-643. One can recognise a bHLH domain in the interval 661 to 715 (NRRITHISAEQKRRFNIKLGFDTLHGLVSTLSAQPSLKVSKATTLQKTAEYILML). A leucine-zipper region spans residues 715–736 (LQQERAAMQEEAQQLRDEIEEL).

Binds DNA as a heterodimer with TCFL4/MLX. In terms of processing, phosphorylation at Ser-566 by AMPK inactivates the DNA-binding activity. As to expression, expressed in the ventricular and intermediate zones of the developing spinal cord of 12.5 dpc embryos. In later embryos expressed in a variety of tissues.

The protein localises to the nucleus. Its function is as follows. Transcriptional repressor. Binds to the canonical and non-canonical E box sequences 5'-CACGTG-3'. This is Carbohydrate-responsive element-binding protein (Mlxipl) from Mus musculus (Mouse).